We begin with the raw amino-acid sequence, 240 residues long: tRNA1(Val) (adenine(37)-N6)-methyltransferase (240 aa).

Belongs to the methyltransferase superfamily. tRNA (adenine-N(6)-)-methyltransferase family.

Its subcellular location is the cytoplasm. The catalysed reaction is adenosine(37) in tRNA1(Val) + S-adenosyl-L-methionine = N(6)-methyladenosine(37) in tRNA1(Val) + S-adenosyl-L-homocysteine + H(+). Functionally, specifically methylates the adenine in position 37 of tRNA(1)(Val) (anticodon cmo5UAC). This is tRNA1(Val) (adenine(37)-N6)-methyltransferase from Vibrio cholerae serotype O1 (strain ATCC 39315 / El Tor Inaba N16961).